Here is a 1375-residue protein sequence, read N- to C-terminus: Protein lingerer (1375 aa).

Residues 1–69 are disordered; it reads MSTQTRSGGG…KAQPKATTEQ (69 aa). The segment covering 53 to 62 has biased composition (basic and acidic residues); the sequence is SKTDKPEKAQ. Residues 84–124 enclose the UBA domain; sequence QINEKVLLLLTMTQRSEEEVCCALNECDYDLEAAANFLIEE. Low complexity-rich tracts occupy residues 142 to 161 and 173 to 184; these read ANNTADGAAGDGDWADGNGN and SNRGGTRGSSDS. The segment at 142–286 is disordered; that stretch reads ANNTADGAAG…GSGRGGNANE (145 aa). The segment covering 185–204 has biased composition (basic and acidic residues); the sequence is RGWRGRETRENERNQRESRE. A compositionally biased stretch (gly residues) spans 228 to 282; sequence RNGGGRSGPGGGGRGGGFVSRSGRGGGRMGGRTGGPRGDRGSGGPGGAYGSGRGG. Tyr321 is modified (phosphotyrosine). A Phosphoserine modification is found at Ser324. 2 stretches are compositionally biased toward polar residues: residues 374-387 and 395-412; these read VQQGSHLEESSSSG and ATLSGSATTPLLQYSAAV. 2 disordered regions span residues 374–453 and 613–646; these read VQQG…ASPD and FEPLPEKVGSGFSIDGQQQQQQPDDYQSKSQQQQ. Residues 426-441 are compositionally biased toward gly residues; the sequence is SGAGTGASAAAGGGAG. Low complexity-rich tracts occupy residues 442-453 and 629-646; these read STPSSFVSASPD and QQQQQQPDDYQSKSQQQQ. At Ser672 the chain carries Phosphoserine. A Phosphothreonine modification is found at Thr673. Position 674 is a phosphoserine (Ser674). The span at 750 to 767 shows a compositional bias: low complexity; that stretch reads QGYGSYQPSSYQQQAGSG. Disordered stretches follow at residues 750-801, 869-894, 987-1036, 1203-1234, and 1251-1277; these read QGYG…SGNA, SVSTSSGVSSNSGSTGNGGVVSGQTG, KNTS…GGSG, SKGGYSSSVNQQSKTQTVSNQSQAGTGSDLTS, and EKQSFHSGTPPPFNMPNTQTAGGTSAQ. The segment covering 768-781 has biased composition (gly residues); the sequence is AQSGTGAVSGGGGT. Composition is skewed to low complexity over residues 789–801, 869–882, and 987–1008; these read GGSSSQNSTSGNA, SVSTSSGVSSNSGS, and KNTSSSNSSGSGGSAATTTGNA. Residues 1009 to 1036 show a composition bias toward gly residues; it reads SGQGAGASTGGVGSSSGAGGAGSGGGSG. Residues 1265–1277 show a composition bias toward polar residues; it reads MPNTQTAGGTSAQ.

At stage 11, expression is restricted to the neuroblasts, predominant in the central nervous system (CNS), including the brain and ventral nerve cord, and in the PNS. Later embryonic expression is seen in the gonads. Late third instar larvae show expression in the CNS, imaginal disks (including genital, eye-antennal, leg, wing and haltere disks), and gonads. In the larval brain, it is expressed in all of the glial cells and in clusters of neurons that projected contralaterally. In the larval ventral ganglion, it is expressed in subperineurial glia, peripheral exit glia, and a number of interneurons, but not in motor neurons. Isoform B is abundantly expressed in males and females. Isoform D is male specific and expressed at low levels.

The protein localises to the cytoplasm. Its function is as follows. Acts in the nervous system to mediate the control of copulatory organs during courtship. This is Protein lingerer from Drosophila melanogaster (Fruit fly).